The following is a 377-amino-acid chain: Succinyl-diaminopimelate desuccinylase (377 aa).

His-68 contributes to the Zn(2+) binding site. The active site involves Asp-70. Asp-101 is a Zn(2+) binding site. Glu-135 (proton acceptor) is an active-site residue. 3 residues coordinate Zn(2+): Glu-136, Glu-164, and His-350.

This sequence belongs to the peptidase M20A family. DapE subfamily. As to quaternary structure, homodimer. Zn(2+) serves as cofactor. Co(2+) is required as a cofactor.

It carries out the reaction N-succinyl-(2S,6S)-2,6-diaminopimelate + H2O = (2S,6S)-2,6-diaminopimelate + succinate. It functions in the pathway amino-acid biosynthesis; L-lysine biosynthesis via DAP pathway; LL-2,6-diaminopimelate from (S)-tetrahydrodipicolinate (succinylase route): step 3/3. Functionally, catalyzes the hydrolysis of N-succinyl-L,L-diaminopimelic acid (SDAP), forming succinate and LL-2,6-diaminopimelate (DAP), an intermediate involved in the bacterial biosynthesis of lysine and meso-diaminopimelic acid, an essential component of bacterial cell walls. This chain is Succinyl-diaminopimelate desuccinylase, found in Aliivibrio salmonicida (strain LFI1238) (Vibrio salmonicida (strain LFI1238)).